We begin with the raw amino-acid sequence, 436 residues long: Gamma-glutamyl phosphate reductase (436 aa).

It belongs to the gamma-glutamyl phosphate reductase family.

The protein localises to the cytoplasm. The catalysed reaction is L-glutamate 5-semialdehyde + phosphate + NADP(+) = L-glutamyl 5-phosphate + NADPH + H(+). The protein operates within amino-acid biosynthesis; L-proline biosynthesis; L-glutamate 5-semialdehyde from L-glutamate: step 2/2. Catalyzes the NADPH-dependent reduction of L-glutamate 5-phosphate into L-glutamate 5-semialdehyde and phosphate. The product spontaneously undergoes cyclization to form 1-pyrroline-5-carboxylate. The polypeptide is Gamma-glutamyl phosphate reductase (Salinibacter ruber (strain DSM 13855 / M31)).